A 542-amino-acid chain; its full sequence is Putative cysteine ligase BshC (542 aa).

Residues Val-458–Glu-487 adopt a coiled-coil conformation.

This sequence belongs to the BshC family.

Its function is as follows. Involved in bacillithiol (BSH) biosynthesis. May catalyze the last step of the pathway, the addition of cysteine to glucosamine malate (GlcN-Mal) to generate BSH. The polypeptide is Putative cysteine ligase BshC (Geobacillus kaustophilus (strain HTA426)).